Reading from the N-terminus, the 879-residue chain is Band 4.1-like protein 1 (879 aa).

Residues 1 to 88 (MTTETGPDSE…TPSKAQKSPQ (88 aa)) form a disordered region. The span at 17-35 (ETPQQPEAAAAVTTPVTPA) shows a compositional bias: low complexity. Thr30 is modified (phosphothreonine). Basic and acidic residues predominate over residues 38 to 50 (SHPETNSNEKHLT). Ser75 carries the post-translational modification Phosphoserine. The span at 76–87 (ERTTPSKAQKSP) shows a compositional bias: polar residues. Residue Thr79 is modified to Phosphothreonine. An FERM domain is found at 97–378 (AICRVTLLDA…EHHTFFRLVS (282 aa)). Tyr343 is subject to Phosphotyrosine. Phosphoserine is present on residues Ser378, Ser430, Ser437, Ser461, and Ser466. Positions 381–482 (PPPKGFLVMG…VRTPTKIKEL (102 aa)) are hydrophilic. The interval 428–501 (SRSLDGAEFS…HKQEFLDKPE (74 aa)) is disordered. Residues 444–501 (ENHDAGPEGDKREDDAESGGRRSEAEEGEVRTPTKIKELKPEQETTPRHKQEFLDKPE) are compositionally biased toward basic and acidic residues. A Phosphothreonine modification is found at Thr475. The tract at residues 483–541 (KPEQETTPRHKQEFLDKPEDVLLKHQASINELKRTLKEPNSKLIHRDRDWDRERRLPSS) is spectrin--actin-binding. At Ser510 the chain carries Phosphoserine. Basic and acidic residues predominate over residues 514–538 (LKRTLKEPNSKLIHRDRDWDRERRL). Positions 514–594 (LKRTLKEPNS…QDQERDAVFL (81 aa)) are disordered. Residues Ser540, Ser541, Ser544, and Ser546 each carry the phosphoserine modification. The residue at position 550 (Thr550) is a Phosphothreonine. Residues 550-577 (TPEKASERAGLREGSEEKVKPPRPRAPE) are compositionally biased toward basic and acidic residues. Ser564, Ser578, Ser639, Ser648, Ser650, Ser665, Ser666, Ser671, Ser677, and Ser684 each carry phosphoserine. A disordered region spans residues 657–696 (FAQDLKGPSSQEDESGGLEDSPDRGACSTPEMPQFESVKA). Thr685 is subject to Phosphothreonine. A phosphoserine mark is found at Ser721, Ser782, and Ser868. Residues 743–879 (PCITTETIST…EERDKKPQES (137 aa)) are C-terminal (CTD).

As to quaternary structure, interacts with AGAP2. As to expression, highest expression in brain, also present in kidney, olfactory epithelium, retina, sensory ganglia, gastrointestinal tract (only enteric neurons) and lung.

Its subcellular location is the cytoplasm. It localises to the cytoskeleton. In terms of biological role, may function to confer stability and plasticity to neuronal membrane via multiple interactions, including the spectrin-actin-based cytoskeleton, integral membrane channels and membrane-associated guanylate kinases. The protein is Band 4.1-like protein 1 of Mus musculus (Mouse).